Reading from the N-terminus, the 229-residue chain is Cytochrome b translational activator protein CBS1, mitochondrial (229 aa).

The N-terminal 25 residues, 1–25, are a transit peptide targeting the mitochondrion; it reads MLRTKVFATTVARISGIRRYIPIRT.

It is found in the mitochondrion inner membrane. In terms of biological role, mRNA-specific translational activator of cytochrome b. The cytochrome b (COB) leader RNA may represent the target sequence for CBS1 and CBS2, tethering the COB mRNA to the inner mitochondrial membrane, where cotranslational insertion of cytochrome b into the membrane can occur. The protein is Cytochrome b translational activator protein CBS1, mitochondrial (CBS1) of Saccharomyces cerevisiae (strain ATCC 204508 / S288c) (Baker's yeast).